A 382-amino-acid chain; its full sequence is Chaperone protein DnaJ (382 aa).

In terms of domain architecture, J spans 5 to 70 (DYYEVLGVSR…DKKAAYDRYG (66 aa)). The segment at 141–219 (GVQKTINVPA…CHGAGRVEKE (79 aa)) adopts a CR-type zinc-finger fold. Zn(2+)-binding residues include Cys-154, Cys-157, Cys-171, Cys-174, Cys-193, Cys-196, Cys-207, and Cys-210. CXXCXGXG motif repeat units follow at residues 154–161 (CDACKGTG), 171–178 (CPTCSGMG), 193–200 (CPTCNGMG), and 207–214 (CKVCHGAG).

This sequence belongs to the DnaJ family. Homodimer. It depends on Zn(2+) as a cofactor.

Its subcellular location is the cytoplasm. Its function is as follows. Participates actively in the response to hyperosmotic and heat shock by preventing the aggregation of stress-denatured proteins and by disaggregating proteins, also in an autonomous, DnaK-independent fashion. Unfolded proteins bind initially to DnaJ; upon interaction with the DnaJ-bound protein, DnaK hydrolyzes its bound ATP, resulting in the formation of a stable complex. GrpE releases ADP from DnaK; ATP binding to DnaK triggers the release of the substrate protein, thus completing the reaction cycle. Several rounds of ATP-dependent interactions between DnaJ, DnaK and GrpE are required for fully efficient folding. Also involved, together with DnaK and GrpE, in the DNA replication of plasmids through activation of initiation proteins. This is Chaperone protein DnaJ from Cereibacter sphaeroides (strain ATCC 17029 / ATH 2.4.9) (Rhodobacter sphaeroides).